The following is a 260-amino-acid chain: HLA class II histocompatibility antigen, DP alpha 1 chain (260 aa).

The signal sequence occupies residues 1–28 (MRPEDRMFHIRAVILRALSLAFLLSLRG). The tract at residues 29–115 (AGAIKADHVS…QRSNHTQATN (87 aa)) is alpha-1. Residues 29–222 (AGAIKADHVS…EPIQMPETTE (194 aa)) are Extracellular-facing. 2 N-linked (GlcNAc...) asparagine glycosylation sites follow: asparagine 109 and asparagine 149. Positions 116 to 209 (DPPEVTVFPK…GLDQPLLKHW (94 aa)) are alpha-2. One can recognise an Ig-like C1-type domain in the interval 118 to 210 (PEVTVFPKEP…LDQPLLKHWE (93 aa)). A disulfide bridge links cysteine 138 with cysteine 194. A connecting peptide region spans residues 210–222 (EAQEPIQMPETTE). Residues 223 to 245 (TVLCALGLVLGLVGIIVGTVLII) form a helical membrane-spanning segment. Residues 246-260 (KSLRSGHDPRAQGTL) lie on the Cytoplasmic side of the membrane.

Belongs to the MHC class II family. Heterodimer of an alpha and a beta subunit; also referred as MHC class II molecule. In the endoplasmic reticulum (ER) it forms a heterononamer; 3 MHC class II molecules bind to a CD74 homotrimer (also known as invariant chain or HLA class II histocompatibility antigen gamma chain). In the endosomal/lysosomal system; CD74 undergoes sequential degradation by various proteases; leaving a small fragment termed CLIP on each MHC class II molecule. MHC class II molecule interacts with HLA_DM, and HLA_DO in B-cells, in order to release CLIP and facilitate the binding of antigenic peptides.

It localises to the cell membrane. It is found in the endoplasmic reticulum membrane. The protein resides in the golgi apparatus. Its subcellular location is the trans-Golgi network membrane. The protein localises to the endosome membrane. It localises to the lysosome membrane. Functionally, binds peptides derived from antigens that access the endocytic route of antigen presenting cells (APC) and presents them on the cell surface for recognition by the CD4 T-cells. The peptide binding cleft accommodates peptides of 10-30 residues. The peptides presented by MHC class II molecules are generated mostly by degradation of proteins that access the endocytic route, where they are processed by lysosomal proteases and other hydrolases. Exogenous antigens that have been endocytosed by the APC are thus readily available for presentation via MHC II molecules, and for this reason this antigen presentation pathway is usually referred to as exogenous. As membrane proteins on their way to degradation in lysosomes as part of their normal turn-over are also contained in the endosomal/lysosomal compartments, exogenous antigens must compete with those derived from endogenous components. Autophagy is also a source of endogenous peptides, autophagosomes constitutively fuse with MHC class II loading compartments. In addition to APCs, other cells of the gastrointestinal tract, such as epithelial cells, express MHC class II molecules and CD74 and act as APCs, which is an unusual trait of the GI tract. To produce a MHC class II molecule that presents an antigen, three MHC class II molecules (heterodimers of an alpha and a beta chain) associate with a CD74 trimer in the ER to form a heterononamer. Soon after the entry of this complex into the endosomal/lysosomal system where antigen processing occurs, CD74 undergoes a sequential degradation by various proteases, including CTSS and CTSL, leaving a small fragment termed CLIP (class-II-associated invariant chain peptide). The removal of CLIP is facilitated by HLA-DM via direct binding to the alpha-beta-CLIP complex so that CLIP is released. HLA-DM stabilizes MHC class II molecules until primary high affinity antigenic peptides are bound. The MHC II molecule bound to a peptide is then transported to the cell membrane surface. In B-cells, the interaction between HLA-DM and MHC class II molecules is regulated by HLA-DO. Primary dendritic cells (DCs) also to express HLA-DO. Lysosomal microenvironment has been implicated in the regulation of antigen loading into MHC II molecules, increased acidification produces increased proteolysis and efficient peptide loading. The sequence is that of HLA class II histocompatibility antigen, DP alpha 1 chain (HLA-DPA1) from Homo sapiens (Human).